The following is a 155-amino-acid chain: Snaclec clone 2100755 (155 aa).

Positions methionine 1–alanine 23 are cleaved as a signal peptide. 3 cysteine pairs are disulfide-bonded: cysteine 25–cysteine 36, cysteine 53–cysteine 144, and cysteine 119–cysteine 136. Residues tyrosine 32 to lysine 145 enclose the C-type lectin domain.

The protein belongs to the snaclec family. As to quaternary structure, heterodimer; disulfide-linked.

It localises to the secreted. Functionally, interferes with one step of hemostasis (modulation of platelet aggregation, or coagulation cascade, for example). The protein is Snaclec clone 2100755 of Deinagkistrodon acutus (Hundred-pace snake).